The sequence spans 540 residues: Zinc finger CCCH domain-containing protein 46 (540 aa).

The C3H1-type zinc-finger motif lies at 148–175; sequence GFGGVPCSYFARGFCKNGASCRFVHSDG. An RRM domain is found at 258–334; it reads RQIYLTFPAD…RVLVKPYKEK (77 aa). Composition is skewed to basic and acidic residues over residues 337–351 and 436–450; these read VPDKYRTNQTTEREL and EYDGGEKGKGSSKEG. Disordered stretches follow at residues 337-365, 436-469, and 490-514; these read VPDKYRTNQTTERELSPTGLDSSPRDVLG, EYDGGEKGKGSSKEGSDDDTMNLPERLEDSLPDS, and SDLWSPSSDNDDNSTPSTLSDSFNS. At serine 451 the chain carries Phosphoserine. Positions 490 to 511 are enriched in low complexity; sequence SDLWSPSSDNDDNSTPSTLSDS.

Possesses RNA-binding and ribonuclease activities in vitro. In Arabidopsis thaliana (Mouse-ear cress), this protein is Zinc finger CCCH domain-containing protein 46.